The following is a 314-amino-acid chain: MKVSLLIFLIILVGVIKSFDINSIDDSHWESDEGFEHHKCWKNLTGYYTEFALSAYNTMFPTPYGVIPVSFYEGGVVTADIKGQQMYVHYGIVAKNFTTWGQYYAYGKNQTQYVVNNSSCVAMKLQFPFPDKLPKFKKVGTTKIGQTDVDVWIVKGKQQCNVTRSCILIQKDTCTLMSANFGNKDKSNLGFSLLNYYRYENKPHYDKFQLPSQCWDVKPKDENENKEEQGLFANEEELENKEYFGDNQQAPSMRITKNNPHLNNNNNNKKYHHREHETPNPDLIKTTTKTSTKTTSFSRATNDSPKSIDFHHLF.

A signal peptide spans 1–18 (MKVSLLIFLIILVGVIKS). Residues N43, N96, N109, N116, N117, and N161 are each glycosylated (N-linked (GlcNAc...) asparagine). Residues 252–314 (SMRITKNNPH…PKSIDFHHLF (63 aa)) form a disordered region. Low complexity-rich tracts occupy residues 257–268 (KNNPHLNNNNNN) and 285–296 (KTTTKTSTKTTS).

Its subcellular location is the secreted. This is an uncharacterized protein from Dictyostelium discoideum (Social amoeba).